Here is an 85-residue protein sequence, read N- to C-terminus: Large ribosomal subunit protein bL27 (85 aa).

The interval 1–21 is disordered; the sequence is MAHKKAGGSTRNGRDSESKRL.

The protein belongs to the bacterial ribosomal protein bL27 family.

This chain is Large ribosomal subunit protein bL27, found in Ectopseudomonas mendocina (strain ymp) (Pseudomonas mendocina).